A 238-amino-acid polypeptide reads, in one-letter code: Histidine/lysine/arginine/ornithine transport system permease protein HisM (238 aa).

At 1–26 (MIEILHEYWKPLLWTDGYRFTGVAIT) the chain is on the periplasmic side. The ABC transmembrane type-1 domain maps to 23–221 (VAITLWLLIL…IISYVLISLF (199 aa)). The chain crosses the membrane as a helical span at residues 27-47 (LWLLILSVVIGGVLALFLAIG). Residues 48 to 58 (RVSSNKYIQFP) lie on the Cytoplasmic side of the membrane. Residues 59–79 (IWLFTYIFRGTPLYVQLLVFY) form a helical membrane-spanning segment. The Periplasmic segment spans residues 80–104 (SGMYTLEIVKGTEFLNAFFRSGLNC). A helical transmembrane segment spans residues 105 to 125 (TVLALTLNTCAYTTEIFAGAI). The Cytoplasmic portion of the chain corresponds to 126 to 157 (RSVPHGEIEAARAYGFSTFKMYRCIILPSALR). The helical transmembrane segment at 158-178 (IALPAYSNEVILMLHSTALAF) threads the bilayer. Residues 179–199 (TATVPDLLKIARDINAATYQP) are Periplasmic-facing. Residues 200-220 (FTAFGIAAVLYLIISYVLISL) form a helical membrane-spanning segment. At 221 to 238 (FRRAEKRWLQHVKPSSTH) the chain is on the cytoplasmic side.

This sequence belongs to the binding-protein-dependent transport system permease family. HisMQ subfamily. In terms of assembly, the HisPMQJ complex is composed of two ATP-binding proteins (HisP), two transmembrane proteins (HisM and HisQ) and a solute-binding protein (HisJ). The HisPMQ-ArgT complex is composed of two ATP-binding proteins (HisP), two transmembrane proteins (HisM and HisQ) and a solute-binding protein (ArgT).

It localises to the cell inner membrane. Functionally, part of the ABC transporter complex HisPMQJ involved in histidine transport. Is also part of the ABC transporter complex HisPMQ-ArgT involved in lysine/arginine/ornithine transport. Probably responsible for the translocation of the substrate across the membrane. The sequence is that of Histidine/lysine/arginine/ornithine transport system permease protein HisM (hisM) from Escherichia coli O157:H7.